A 95-amino-acid polypeptide reads, in one-letter code: Cerebratulus toxin A-III (95 aa).

Cystine bridges form between cysteine 17–cysteine 38, cysteine 23–cysteine 34, and cysteine 48–cysteine 61.

This sequence belongs to the worm cytolysin family.

It localises to the secreted. In terms of biological role, permeabilizes a variety of cells. Forms large pores which allows the release of large proteins almost as rapidly as small organic molecules and inorganic ions. At sublytic concentrations, the toxin also inhibits protein kinase C and endogenous voltage-gated cation selective (sodium, calcium) channels occurring in the nervous and cardiovascular systems. This is Cerebratulus toxin A-III from Cerebratulus lacteus (Milky ribbon worm).